We begin with the raw amino-acid sequence, 300 residues long: Taste receptor type 2 member 105 (300 aa).

At Met-1–Gly-7 the chain is on the extracellular side. A helical membrane pass occupies residues Ile-8 to Ala-28. Topologically, residues Leu-29–Met-43 are cytoplasmic. A helical transmembrane segment spans residues Thr-44–Leu-64. Residues Asp-65–Tyr-87 are Extracellular-facing. Residues Ile-88–Phe-108 traverse the membrane as a helical segment. Topologically, residues Leu-109–Lys-128 are cytoplasmic. A helical membrane pass occupies residues Ala-129 to Val-149. Residues Lys-150–Asn-181 lie on the Extracellular side of the membrane. A glycan (N-linked (GlcNAc...) asparagine) is linked at Asn-161. Residues Ile-182–Leu-202 form a helical membrane-spanning segment. Over Trp-203–Ser-233 the chain is Cytoplasmic. Residues Phe-234–Ile-254 traverse the membrane as a helical segment. Residues Pro-255–Leu-259 are Extracellular-facing. The chain crosses the membrane as a helical span at residues Leu-260 to Ile-280. At Leu-281–Phe-300 the chain is on the cytoplasmic side.

Belongs to the G-protein coupled receptor T2R family. In terms of tissue distribution, expressed in subsets of taste receptor cells of the tongue and palate epithelium and exclusively in gustducin-positive cells. Expressed in gastric and duodenal tissues.

It localises to the membrane. Gustducin-coupled cycloheximide receptor implicated in the perception of bitter compounds in the oral cavity and the gastrointestinal tract. Signals through PLCB2 and the calcium-regulated cation channel TRPM5. The sequence is that of Taste receptor type 2 member 105 (Tas2r105) from Mus musculus (Mouse).